The primary structure comprises 251 residues: Hydroxyacylglutathione hydrolase (251 aa).

Residues His-58, His-60, Asp-62, His-63, His-116, Asp-135, and His-173 each coordinate Zn(2+).

Belongs to the metallo-beta-lactamase superfamily. Glyoxalase II family. In terms of assembly, monomer. It depends on Zn(2+) as a cofactor.

It catalyses the reaction an S-(2-hydroxyacyl)glutathione + H2O = a 2-hydroxy carboxylate + glutathione + H(+). Its pathway is secondary metabolite metabolism; methylglyoxal degradation; (R)-lactate from methylglyoxal: step 2/2. Functionally, thiolesterase that catalyzes the hydrolysis of S-D-lactoyl-glutathione to form glutathione and D-lactic acid. This Bdellovibrio bacteriovorus (strain ATCC 15356 / DSM 50701 / NCIMB 9529 / HD100) protein is Hydroxyacylglutathione hydrolase.